We begin with the raw amino-acid sequence, 63 residues long: Large ribosomal subunit protein bL28 (63 aa).

The protein belongs to the bacterial ribosomal protein bL28 family.

The chain is Large ribosomal subunit protein bL28 from Beutenbergia cavernae (strain ATCC BAA-8 / DSM 12333 / CCUG 43141 / JCM 11478 / NBRC 16432 / NCIMB 13614 / HKI 0122).